Reading from the N-terminus, the 396-residue chain is Elongation factor Tu 2 (396 aa).

The tr-type G domain occupies 10-206 (KPHVNVGTIG…ALDTYIPTPE (197 aa)). Residues 19–26 (GHVDHGKT) are G1. 19-26 (GHVDHGKT) contributes to the GTP binding site. Position 26 (Thr26) interacts with Mg(2+). The interval 60 to 64 (GITIN) is G2. The interval 81-84 (DCPG) is G3. GTP contacts are provided by residues 81–85 (DCPGH) and 136–139 (NKCD). Positions 136–139 (NKCD) are G4. The tract at residues 174 to 176 (SAK) is G5.

This sequence belongs to the TRAFAC class translation factor GTPase superfamily. Classic translation factor GTPase family. EF-Tu/EF-1A subfamily. Monomer.

The protein resides in the cytoplasm. The enzyme catalyses GTP + H2O = GDP + phosphate + H(+). In terms of biological role, GTP hydrolase that promotes the GTP-dependent binding of aminoacyl-tRNA to the A-site of ribosomes during protein biosynthesis. The polypeptide is Elongation factor Tu 2 (Acidovorax sp. (strain JS42)).